We begin with the raw amino-acid sequence, 373 residues long: Secondary metabolism regulator laeA (373 aa).

Positions 55–81 are disordered; it reads ERDPAAGRWHANGSPSINSTSSKNPDR. Residues 67–77 show a composition bias toward polar residues; that stretch reads GSPSINSTSSK.

This sequence belongs to the methyltransferase superfamily. LaeA methyltransferase family. Component of the heterotrimeric velvet complex composed of laeA, veA and velB; VeA acting as a bridging protein between laeA and velB.

Its subcellular location is the nucleus. It carries out the reaction L-methionyl-[protein] + S-adenosyl-L-methionine = S-methyl-L-methionyl-[protein] + S-adenosyl-L-homocysteine. Its function is as follows. Methyltransferase that performs automethylation. No other methyl-accepting substrate has been identified yet. Component of the velvet transcription factor complex that acts as a global regulator for secondary metabolite gene expression. Positively controls expression of 20% to 40% of major classes of secondary metabolite biosynthesis genes such as nonribosomal peptide synthetases, polyketide synthases, and P450 monooxygenases. Controls the expression of the gliotoxin gene cluster. Controls the expression of the fumitremorgin, fumagillin, and pseurotin gene clusters, where genes for fumagillin and pseurotin are physically intertwined in a single supercluster. Regulates the biosynthetic genes required for endocrocin production. Secondary metabolites under the transcriptional regulation of laeA are necessary for inhibition of angiogenesis during invasive infection in mice. Controls the expression of cell surface rodA, a hydrophobin that acts as an antiphagocytic molecule. Also regulates the expression of genes involved in conidial biosynthesis. In Aspergillus fumigatus (strain ATCC MYA-4609 / CBS 101355 / FGSC A1100 / Af293) (Neosartorya fumigata), this protein is Secondary metabolism regulator laeA.